The following is a 74-amino-acid chain: ATP synthase subunit c (74 aa).

The next 2 membrane-spanning stretches (helical) occupy residues 13–33 (ISVI…ASLI) and 51–71 (ILGF…AFLI).

This sequence belongs to the ATPase C chain family. In terms of assembly, F-type ATPases have 2 components, F(1) - the catalytic core - and F(0) - the membrane proton channel. F(1) has five subunits: alpha(3), beta(3), gamma(1), delta(1), epsilon(1). F(0) has three main subunits: a(1), b(2) and c(10-14). The alpha and beta chains form an alternating ring which encloses part of the gamma chain. F(1) is attached to F(0) by a central stalk formed by the gamma and epsilon chains, while a peripheral stalk is formed by the delta and b chains.

The protein localises to the cell inner membrane. F(1)F(0) ATP synthase produces ATP from ADP in the presence of a proton or sodium gradient. F-type ATPases consist of two structural domains, F(1) containing the extramembraneous catalytic core and F(0) containing the membrane proton channel, linked together by a central stalk and a peripheral stalk. During catalysis, ATP synthesis in the catalytic domain of F(1) is coupled via a rotary mechanism of the central stalk subunits to proton translocation. Its function is as follows. Key component of the F(0) channel; it plays a direct role in translocation across the membrane. A homomeric c-ring of between 10-14 subunits forms the central stalk rotor element with the F(1) delta and epsilon subunits. The polypeptide is ATP synthase subunit c (Granulibacter bethesdensis (strain ATCC BAA-1260 / CGDNIH1)).